Reading from the N-terminus, the 283-residue chain is Non-selective voltage-gated ion channel VDAC1 (283 aa).

A2 carries the post-translational modification N-acetylalanine. K12 contacts ATP. A Glycyl lysine isopeptide (Lys-Gly) (interchain with G-Cter in ubiquitin) cross-link involves residue K12. S13 carries the phosphoserine modification. T19 is subject to Phosphothreonine. Residue K20 coordinates ATP. K20 carries the N6-acetyllysine; alternate modification. K20 is modified (N6-succinyllysine; alternate). A Glycyl lysine isopeptide (Lys-Gly) (interchain with G-Cter in ubiquitin); alternate cross-link involves residue K20. Beta stranded transmembrane passes span 26 to 35 (LIKLDLKTKS) and 39 to 47 (LEFTSSGSA). Residues K53 and K61 each participate in a glycyl lysine isopeptide (Lys-Gly) (interchain with G-Cter in ubiquitin) cross-link. The chain crosses the membrane as a beta stranded span at residues 54–64 (VTGSLETKYRW). Y67 carries the post-translational modification Phosphotyrosine. The next 3 membrane-spanning stretches (beta stranded) occupy residues 69-76 (LTFTEKWN), 80-89 (TLGTEITVED), and 95-104 (LKLTFDSSFS). Phosphothreonine is present on T107. Residue K109 is modified to N6-acetyllysine; alternate. A Glycyl lysine isopeptide (Lys-Gly) (interchain with G-Cter in ubiquitin); alternate cross-link involves residue K109. A Glycyl lysine isopeptide (Lys-Gly) (interchain with G-Cter in ubiquitin) cross-link involves residue K110. 4 beta stranded membrane-spanning segments follow: residues 111–120 (NAKIKTGYKR), 123–130 (VNLGCDVD), 137–145 (SIRGALVLG), and 150–158 (LAGYQMNFE). K161 participates in a covalent cross-link: Glycyl lysine isopeptide (Lys-Gly) (interchain with G-Cter in ubiquitin). 6 beta stranded membrane-spanning segments follow: residues 163–175 (RVTQ…GYKT), 178–185 (FQLHTNVN), 189–198 (EFGGSIYQKV), 202–211 (LETAVNLAWT), 218–227 (RFGIAAKYQI), and 231–238 (ACFSAKVN). Position 193 is a phosphoserine; by NEK1 (S193). S240 carries the phosphoserine modification. 242 to 244 (LIG) serves as a coordination point for NAD(+). A beta stranded membrane pass occupies residues 242–251 (LIGLGYTQTL). At K252 the chain carries N6-acetyllysine. A beta stranded transmembrane segment spans residues 254 to 263 (GIKLTLSALL). 260–264 (SALLD) provides a ligand contact to NAD(+). An N6-acetyllysine; alternate modification is found at K266. Residue K266 forms a Glycyl lysine isopeptide (Lys-Gly) (interchain with G-Cter in ubiquitin); alternate linkage. The chain crosses the membrane as a beta stranded span at residues 273–282 (HKLGLGLEFQ). Residue K274 forms a Glycyl lysine isopeptide (Lys-Gly) (interchain with G-Cter in ubiquitin) linkage.

The protein belongs to the eukaryotic mitochondrial porin family. In terms of assembly, homodimer and homotrimer; in response to cyclic AMP or calcium; oligomerization is required for scramblase activity. Component of the mitochondrial permeability transition pore complex (mPTPC), at least composed of SPG7, VDAC1 and PPIF. Interacts with SPG7, NIPSNAP2 and SLC25A30. Interacts with hexokinases including HK1. The HK1-VDAC1 complex interacts with ATF2. Interacts with BCL2L1. Interacts with BAK1. Interacts with RTL10/BOP (via BH3 domain). Interacts with amyloid-beta and APP; induces VDAC1 dephosphorylation. Interacts with TMEM41B. Interacts with BCAP31. Interacts with HSPA9; this interaction couples ITPR1 to VDAC1. In terms of processing, phosphorylation at Ser-193 by NEK1 promotes the closed conformational state preventing excessive mitochondrial membrane permeability and subsequent apoptotic cell death after injury. Phosphorylation by the AKT-GSK3B axis stabilizes the protein probably by preventing ubiquitin-mediated proteasomal degradation. Post-translationally, ubiquitinated. Undergoes monoubiquitination and polyubiquitination by PRKN; monoubiquitination at Lys-274 inhibits apoptosis, whereas polyubiquitination leads to its degradation and promotes mitophagy. Deubiquitinated by USP30.

Its subcellular location is the mitochondrion outer membrane. It is found in the cell membrane. The protein resides in the membrane raft. The enzyme catalyses chloride(in) = chloride(out). It carries out the reaction K(+)(in) = K(+)(out). It catalyses the reaction ATP(in) = ATP(out). The catalysed reaction is Ca(2+)(in) = Ca(2+)(out). The enzyme catalyses Na(+)(in) = Na(+)(out). It carries out the reaction Mg(2+)(in) = Mg(2+)(out). It catalyses the reaction L-glutamate(out) = L-glutamate(in). The catalysed reaction is dopamine(out) = dopamine(in). The enzyme catalyses acetylcholine(in) = acetylcholine(out). It carries out the reaction Fe(III)-[cytochrome c](out) = Fe(III)-[cytochrome c](in). It catalyses the reaction a 1,2-diacyl-sn-glycero-3-phosphocholine(in) = a 1,2-diacyl-sn-glycero-3-phosphocholine(out). The catalysed reaction is a 1,2-diacyl-sn-glycero-3-phospho-L-serine(in) = a 1,2-diacyl-sn-glycero-3-phospho-L-serine(out). Its activity is regulated as follows. Inhibited by nitric oxide. Its function is as follows. Non-selective voltage-gated ion channel that mediates the transport of anions and cations through the mitochondrion outer membrane and plasma membrane. The channel at the outer mitochondrial membrane allows diffusion of small hydrophilic molecules; in the plasma membrane it is involved in cell volume regulation and apoptosis. It adopts an open conformation at low or zero membrane potential and a closed conformation at potentials above 30-40 mV. The open state has a weak anion selectivity whereas the closed state is cation-selective. Binds various signaling molecules, including the sphingolipid ceramide, the phospholipid phosphatidylcholine, and the sterols cholesterol and oxysterol. In depolarized mitochondria, acts downstream of PRKN and PINK1 to promote mitophagy or prevent apoptosis; polyubiquitination by PRKN promotes mitophagy, while monoubiquitination by PRKN decreases mitochondrial calcium influx which ultimately inhibits apoptosis. May participate in the formation of the permeability transition pore complex (PTPC) responsible for the release of mitochondrial products that triggers apoptosis. May mediate ATP export from cells. Part of a complex composed of HSPA9, ITPR1 and VDAC1 that regulates mitochondrial calcium-dependent apoptosis by facilitating calcium transport from the ER lumen to the mitochondria intermembrane space thus providing calcium for the downstream calcium channel MCU that directly releases it into mitochondria matrix. Mediates cytochrome c efflux. Catalyzes the scrambling of phospholipids across the outer mitochondrial membrane; the mechanism is unrelated to channel activity and is capable of translocating both anionic and zwitterionic phospholipids. This is Non-selective voltage-gated ion channel VDAC1 from Sus scrofa (Pig).